A 271-amino-acid chain; its full sequence is Ribosomal RNA small subunit methyltransferase A (271 aa).

Residues H14, L16, G41, E63, D89, and N107 each contribute to the S-adenosyl-L-methionine site.

Belongs to the class I-like SAM-binding methyltransferase superfamily. rRNA adenine N(6)-methyltransferase family. RsmA subfamily.

The protein localises to the cytoplasm. The catalysed reaction is adenosine(1518)/adenosine(1519) in 16S rRNA + 4 S-adenosyl-L-methionine = N(6)-dimethyladenosine(1518)/N(6)-dimethyladenosine(1519) in 16S rRNA + 4 S-adenosyl-L-homocysteine + 4 H(+). Its function is as follows. Specifically dimethylates two adjacent adenosines (A1518 and A1519) in the loop of a conserved hairpin near the 3'-end of 16S rRNA in the 30S particle. May play a critical role in biogenesis of 30S subunits. The chain is Ribosomal RNA small subunit methyltransferase A from Lawsonia intracellularis (strain PHE/MN1-00).